Consider the following 296-residue polypeptide: UDP-N-acetylenolpyruvoylglucosamine reductase (296 aa).

Positions 26 to 191 (RIGGPANYFK…LSATFRLSRN (166 aa)) constitute an FAD-binding PCMH-type domain. Arg170 is a catalytic residue. Cys218 (proton donor) is an active-site residue. Glu287 is a catalytic residue.

Belongs to the MurB family. FAD is required as a cofactor.

The protein resides in the cytoplasm. The catalysed reaction is UDP-N-acetyl-alpha-D-muramate + NADP(+) = UDP-N-acetyl-3-O-(1-carboxyvinyl)-alpha-D-glucosamine + NADPH + H(+). It functions in the pathway cell wall biogenesis; peptidoglycan biosynthesis. Its function is as follows. Cell wall formation. This chain is UDP-N-acetylenolpyruvoylglucosamine reductase, found in Chlamydia abortus (strain DSM 27085 / S26/3) (Chlamydophila abortus).